Here is a 264-residue protein sequence, read N- to C-terminus: Phosphonoacetaldehyde hydrolase (264 aa).

Asp9 acts as the Nucleophile in catalysis. Mg(2+)-binding residues include Asp9 and Ala11. The active-site Schiff-base intermediate with substrate is Lys50. Asp183 contributes to the Mg(2+) binding site.

The protein belongs to the HAD-like hydrolase superfamily. PhnX family. In terms of assembly, homodimer. The cofactor is Mg(2+).

The catalysed reaction is phosphonoacetaldehyde + H2O = acetaldehyde + phosphate + H(+). In terms of biological role, involved in phosphonate degradation. The sequence is that of Phosphonoacetaldehyde hydrolase from Bacillus cereus (strain B4264).